Consider the following 174-residue polypeptide: 2-C-methyl-D-erythritol 2,4-cyclodiphosphate synthase (174 aa).

A divalent metal cation contacts are provided by Asp13, His15, and His61. 13–15 (DAH) contributes to the 4-CDP-2-C-methyl-D-erythritol 2-phosphate binding site. Residues 75 to 77 (DIG), 149 to 152 (TTTD), Phe156, and Arg159 contribute to the 4-CDP-2-C-methyl-D-erythritol 2-phosphate site.

This sequence belongs to the IspF family. As to quaternary structure, homotrimer. It depends on a divalent metal cation as a cofactor.

It carries out the reaction 4-CDP-2-C-methyl-D-erythritol 2-phosphate = 2-C-methyl-D-erythritol 2,4-cyclic diphosphate + CMP. It functions in the pathway isoprenoid biosynthesis; isopentenyl diphosphate biosynthesis via DXP pathway; isopentenyl diphosphate from 1-deoxy-D-xylulose 5-phosphate: step 4/6. Functionally, involved in the biosynthesis of isopentenyl diphosphate (IPP) and dimethylallyl diphosphate (DMAPP), two major building blocks of isoprenoid compounds. Catalyzes the conversion of 4-diphosphocytidyl-2-C-methyl-D-erythritol 2-phosphate (CDP-ME2P) to 2-C-methyl-D-erythritol 2,4-cyclodiphosphate (ME-CPP) with a corresponding release of cytidine 5-monophosphate (CMP). This Bifidobacterium longum subsp. infantis (strain ATCC 15697 / DSM 20088 / JCM 1222 / NCTC 11817 / S12) protein is 2-C-methyl-D-erythritol 2,4-cyclodiphosphate synthase.